The chain runs to 111 residues: Short neuropeptide F (111 aa).

A signal peptide spans 1-24; the sequence is MSAMYAKRCAALVLLVVTVGLVNA. The propeptide occupies 25 to 76; that stretch reads TENYMDYGEEMAEKTPAENIHELYRLLLQRNTLDNAGFGGIPLEHLMIRKSQ. Phenylalanine 85 is subject to Phenylalanine amide. Residues 88–111 constitute a propeptide that is removed on maturation; sequence SGPHVSARALPRPMGAVAGYDDNN.

Expressed throughout the central nervous system (at protein level).

It is found in the secreted. Functionally, plays a role in controlling food intake and regulating body size. The protein is Short neuropeptide F of Camponotus floridanus (Florida carpenter ant).